The chain runs to 320 residues: o-succinylbenzoate synthase (320 aa).

Lys133 acts as the Proton donor in catalysis. Mg(2+) contacts are provided by Asp161, Glu190, and Asp213. Lys235 functions as the Proton acceptor in the catalytic mechanism.

It belongs to the mandelate racemase/muconate lactonizing enzyme family. MenC type 1 subfamily. The cofactor is a divalent metal cation.

The enzyme catalyses (1R,6R)-6-hydroxy-2-succinyl-cyclohexa-2,4-diene-1-carboxylate = 2-succinylbenzoate + H2O. It participates in quinol/quinone metabolism; 1,4-dihydroxy-2-naphthoate biosynthesis; 1,4-dihydroxy-2-naphthoate from chorismate: step 4/7. The protein operates within quinol/quinone metabolism; menaquinone biosynthesis. Converts 2-succinyl-6-hydroxy-2,4-cyclohexadiene-1-carboxylate (SHCHC) to 2-succinylbenzoate (OSB). This is o-succinylbenzoate synthase from Escherichia coli O6:H1 (strain CFT073 / ATCC 700928 / UPEC).